Here is a 479-residue protein sequence, read N- to C-terminus: Glutamyl-tRNA(Gln) amidotransferase subunit A (479 aa).

Catalysis depends on charge relay system residues lysine 75 and serine 150. Serine 174 (acyl-ester intermediate) is an active-site residue.

Belongs to the amidase family. GatA subfamily. In terms of assembly, heterotrimer of A, B and C subunits.

The catalysed reaction is L-glutamyl-tRNA(Gln) + L-glutamine + ATP + H2O = L-glutaminyl-tRNA(Gln) + L-glutamate + ADP + phosphate + H(+). Functionally, allows the formation of correctly charged Gln-tRNA(Gln) through the transamidation of misacylated Glu-tRNA(Gln) in organisms which lack glutaminyl-tRNA synthetase. The reaction takes place in the presence of glutamine and ATP through an activated gamma-phospho-Glu-tRNA(Gln). The sequence is that of Glutamyl-tRNA(Gln) amidotransferase subunit A from Synechococcus elongatus (strain ATCC 33912 / PCC 7942 / FACHB-805) (Anacystis nidulans R2).